We begin with the raw amino-acid sequence, 346 residues long: Cyclin-dependent kinase 20 (346 aa).

One can recognise a Protein kinase domain in the interval 4-288 (YCILGRIGEG…ASQALLHQYF (285 aa)). ATP contacts are provided by residues 10–18 (IGEGAHGIV) and Lys-33. The active-site Proton acceptor is the Asp-127. The tract at residues 298–324 (SELPIPQRPGGPTPKAHPGPPHVHDFH) is disordered. Residues 303–318 (PQRPGGPTPKAHPGPP) show a composition bias toward pro residues.

It belongs to the protein kinase superfamily. CMGC Ser/Thr protein kinase family. CDC2/CDKX subfamily. In terms of assembly, monomer. Interacts with TBC1D32 and MAK.

The protein resides in the nucleus. The protein localises to the cytoplasm. It localises to the cell projection. It is found in the cilium. It catalyses the reaction L-seryl-[protein] + ATP = O-phospho-L-seryl-[protein] + ADP + H(+). The enzyme catalyses L-threonyl-[protein] + ATP = O-phospho-L-threonyl-[protein] + ADP + H(+). Its function is as follows. Required for high-level Shh responses in the developing neural tube. Together with TBC1D32, controls the structure of the primary cilium by coordinating assembly of the ciliary membrane and axoneme, allowing GLI2 to be properly activated in response to SHH signaling. Involved in cell growth. Activates CDK2, a kinase involved in the control of the cell cycle, by phosphorylating residue 'Thr-160'. The polypeptide is Cyclin-dependent kinase 20 (Cdk20) (Rattus norvegicus (Rat)).